The chain runs to 996 residues: MEIDLPFKVEYSKSSRASCKGCKNKIEAGILRIAAMVQSAFHDGKQPNWFHEQCFFQKQRPTSAGDIENFENIRFEDQERIKKAIDNCTTVISAGGSKKGAKRSKGENNAIKDFGIEYAKSGRASCRGCEQKILKDQIRIRKTVFDTEVGMKYGGQPLWHHVECFAQLRGELGWLDTGENLPGFQTLKSDDKADVKKALPVIKDEGVSSAKKAKIEKIDEEDAASIKELTEKIKKQSKRLFKFRDEIKNEMSKDDMVALLEANNMEPVKGDSEKLLDQVADLLTFGALLPCTDCKGRQLLFHKSGYLCNGDLTEWTKCTKLLKEPERKSCKIPGYLKYKFLKDVRKNPEVRAIRYIPPSTSTILKNISLKKGDELDGPKVKRERPPLYNIEIALIAPKEREGIVKDRISKLGGTVSTKITEKTTVVLSTPEEVERMSSRMKKAKTLGLHVIPEDYLEAVEQNGAGAINYISSMSLCDWGTDPATRITQEESKSSKSKSIYTKSVPKSMTLKIKDGLAVDPDSGLEDVAHVYVSRNKEKYNVVLGITDIQKNKNSFYKLQLLESDMKNRFWVFRSWGRIGTTIGGNKLDNFSNLVDAIVQFKELYLEKSGNHFENRENFVKVAGRMYPIDIDYAEDSKIDLSAEHDIKSKLPLSVQDIIKLMFDVDSMKRTMMEFDLDMEKMPLGKLSQKQIQSAYKVLTEIYELIQGGGTNAKFIDATNRFYTLIPHNFGTQSPPLLDTTEQVEQLRQMLDSLIEIECAYSLLQTEDSKADINPIDKHYEQLKTKLEPLDKNSEEYILLQKYVKNTHAETHKLYDLEVVDIFKVARQGEARRYKPFKKLHNRRLLWHGSRLTNFAGILSHGLKIAPPEAPVTGYMFGKGIYFADMVSKSANYCCTSHHNSTGLMLLSEVALGDMMECTAAKYVTKLPNDKHSCFGRGRTMPNPSESIIREDGVEIPLGKPITNDSLKSSLLYNEFIIYDIAQVNIQYMLRMNFKYK.

The DNA-binding element occupies 1-369 (MEIDLPFKVE…TSTILKNISL (369 aa)). 2 PARP-type zinc fingers span residues 7–89 (FKVE…DNCT) and 114–203 (FGIE…PVIK). Zn(2+)-binding residues include cysteine 19, cysteine 22, histidine 51, cysteine 54, cysteine 126, cysteine 129, histidine 161, and cysteine 164. Short sequence motifs (nuclear localization signal) lie at residues 211 to 214 (KKAK) and 232 to 235 (KIKK). The PADR1 zinc-binding domain maps to 220–358 (EEDAASIKEL…EVRAIRYIPP (139 aa)). The segment at 286–329 (GALLPCTDCKGRQLLFHKSGYLCNGDLTEWTKCTKLLKEPERKS) is zinc ribbon. Positions 291, 294, 308, and 318 each coordinate Zn(2+). An automodification domain region spans residues 370-507 (KKGDELDGPK…SIYTKSVPKS (138 aa)). Residues 382-473 (RERPPLYNIE…AGAINYISSM (92 aa)) form the BRCT domain. The WGR domain maps to 527 to 625 (VAHVYVSRNK…ENFVKVAGRM (99 aa)). Residues 647–764 (KSKLPLSVQD…EIECAYSLLQ (118 aa)) enclose the PARP alpha-helical domain. A PARP catalytic domain is found at 773 to 996 (NPIDKHYEQL…YMLRMNFKYK (224 aa)).

The protein belongs to the ARTD/PARP family.

The protein localises to the nucleus. It carries out the reaction NAD(+) + (ADP-D-ribosyl)n-acceptor = nicotinamide + (ADP-D-ribosyl)n+1-acceptor + H(+).. The enzyme catalyses L-aspartyl-[protein] + NAD(+) = 4-O-(ADP-D-ribosyl)-L-aspartyl-[protein] + nicotinamide. The catalysed reaction is L-glutamyl-[protein] + NAD(+) = 5-O-(ADP-D-ribosyl)-L-glutamyl-[protein] + nicotinamide. In terms of biological role, poly-ADP-ribosyltransferase that mediates poly-ADP-ribosylation of proteins and plays a key role in DNA repair. Mainly mediates glutamate and aspartate ADP-ribosylation of target proteins: the ADP-D-ribosyl group of NAD(+) is transferred to the acceptor carboxyl group of glutamate and aspartate residues and further ADP-ribosyl groups are transferred to the 2'-position of the terminal adenosine moiety, building up a polymer with an average chain length of 20-30 units. This chain is Poly [ADP-ribose] polymerase, found in Sarcophaga peregrina (Flesh fly).